The sequence spans 297 residues: Phosphoribosylaminoimidazole-succinocarboxamide synthase (297 aa).

The protein belongs to the SAICAR synthetase family.

The enzyme catalyses 5-amino-1-(5-phospho-D-ribosyl)imidazole-4-carboxylate + L-aspartate + ATP = (2S)-2-[5-amino-1-(5-phospho-beta-D-ribosyl)imidazole-4-carboxamido]succinate + ADP + phosphate + 2 H(+). Its pathway is purine metabolism; IMP biosynthesis via de novo pathway; 5-amino-1-(5-phospho-D-ribosyl)imidazole-4-carboxamide from 5-amino-1-(5-phospho-D-ribosyl)imidazole-4-carboxylate: step 1/2. The sequence is that of Phosphoribosylaminoimidazole-succinocarboxamide synthase from Corynebacterium glutamicum (strain ATCC 13032 / DSM 20300 / JCM 1318 / BCRC 11384 / CCUG 27702 / LMG 3730 / NBRC 12168 / NCIMB 10025 / NRRL B-2784 / 534).